Here is a 77-residue protein sequence, read N- to C-terminus: MKMNITKSYVILFLVVVMTNSLSNSEVLVAPVIETAQNDVCFVPCTSRYGHYECAFDCMHKRYKDGGCVHGRCCCKT.

The signal sequence occupies residues 1-25 (MKMNITKSYVILFLVVVMTNSLSNS). 4 disulfides stabilise this stretch: C41–C75, C45–C68, C54–C73, and C58–C74.

This sequence belongs to the DEFL family.

It is found in the secreted. This Arabidopsis thaliana (Mouse-ear cress) protein is Putative defensin-like protein 60.